The primary structure comprises 194 residues: Adenylate kinase (194 aa).

Residue 8–16 (GIPGVGKTT) participates in ATP binding.

Belongs to the archaeal adenylate kinase family.

It localises to the cytoplasm. It catalyses the reaction AMP + ATP = 2 ADP. The polypeptide is Adenylate kinase (adkA) (Sulfurisphaera tokodaii (strain DSM 16993 / JCM 10545 / NBRC 100140 / 7) (Sulfolobus tokodaii)).